The sequence spans 566 residues: Myo-inositol transporter 1A (566 aa).

Topologically, residues 1–64 are cytoplasmic; it reads MSDEKNYGIS…ERTEKLTKFV (64 aa). A helical transmembrane segment spans residues 65 to 85; the sequence is VGLALFASVSGFCFGFDTGVI. The Extracellular portion of the chain corresponds to 86 to 106; sequence SAALVSIKDDFGHILDDTEKE. A helical membrane pass occupies residues 107–127; that stretch reads WISAATSCGALVGALSSGALA. The Cytoplasmic portion of the chain corresponds to 128-140; that stretch reads DRVGRKWTLAVGD. The helical transmembrane segment at 141-161 threads the bilayer; the sequence is VWFTLGAIIICSSFSVVQMIV. Residues 162–163 are Extracellular-facing; it reads GR. Residues 164–184 traverse the membrane as a helical segment; the sequence is AVLGLGVGTAAAIAPLYIAEV. Residues 185-192 lie on the Cytoplasmic side of the membrane; that stretch reads APTRFRGA. Residues 193–213 traverse the membrane as a helical segment; that stretch reads LVTVQSIAITGGQFFSYCIGI. The Extracellular segment spans residues 214 to 222; sequence PLTGHNGWR. A helical transmembrane segment spans residues 223 to 243; it reads IQFAIGIVPAVVQAAVVHFLP. At 244-313 the chain is on the cytoplasmic side; it reads ESPRYDLLRG…VLTEGKYRKP (70 aa). Residues 314–334 traverse the membrane as a helical segment; sequence AITALGIGIFQQLCGFNSLMY. The Extracellular portion of the chain corresponds to 335 to 349; the sequence is YAATIFSYAGFDNPT. The helical transmembrane segment at 350-370 threads the bilayer; that stretch reads SVGLIVSGTNWFFTFVAMMIL. Topologically, residues 371–377 are cytoplasmic; the sequence is DRVGKRR. Residues 378–398 form a helical membrane-spanning segment; that stretch reads ILLSTYPGMIAGLALASVAFW. At 399–421 the chain is on the extracellular side; that stretch reads KMTGSTGHRLVEGTEYPQQWSNM. The chain crosses the membrane as a helical span at residues 422–442; it reads MLGMMVVFIAFYATGSGNITW. Over 443-458 the chain is Cytoplasmic; it reads TVGEMFPLEMRGIGAS. A helical transmembrane segment spans residues 459 to 479; sequence ILAGGVWAANIVISATFLTLM. At 480 to 485 the chain is on the extracellular side; it reads NAIGPT. A helical membrane pass occupies residues 486-506; the sequence is PTFALYAGICLAGLIFIYFCY. At 507-566 the chain is on the cytoplasmic side; that stretch reads PEPSGLSLEEIQIIYNYGFGVQKSREIRAEHKLKAQEMRDRANSHIGGSATASDDQLNKV. The disordered stretch occupies residues 546–566; it reads DRANSHIGGSATASDDQLNKV. Positions 556–566 are enriched in polar residues; it reads ATASDDQLNKV.

Belongs to the major facilitator superfamily. Sugar transporter (TC 2.A.1.1) family.

It localises to the cell membrane. The catalysed reaction is myo-inositol(out) + H(+)(out) = myo-inositol(in) + H(+)(in). In terms of biological role, major transporter for myo-inositol. Plays a role in the traversal of the host blood-brain barrier. This Cryptococcus neoformans var. grubii serotype A (strain H99 / ATCC 208821 / CBS 10515 / FGSC 9487) (Filobasidiella neoformans var. grubii) protein is Myo-inositol transporter 1A.